Consider the following 316-residue polypeptide: Pantothenate kinase (316 aa).

95-102 (GSVAVGKS) is a binding site for ATP.

Belongs to the prokaryotic pantothenate kinase family.

The protein resides in the cytoplasm. It catalyses the reaction (R)-pantothenate + ATP = (R)-4'-phosphopantothenate + ADP + H(+). It participates in cofactor biosynthesis; coenzyme A biosynthesis; CoA from (R)-pantothenate: step 1/5. This Shewanella halifaxensis (strain HAW-EB4) protein is Pantothenate kinase.